A 247-amino-acid chain; its full sequence is Orotidine 5'-phosphate decarboxylase (247 aa).

Substrate-binding positions include aspartate 22, lysine 44, 71 to 80 (DLKFHDIPNT), threonine 131, arginine 192, glutamine 201, glycine 221, and arginine 222. The active-site Proton donor is lysine 73.

The protein belongs to the OMP decarboxylase family. Type 1 subfamily. As to quaternary structure, homodimer.

It catalyses the reaction orotidine 5'-phosphate + H(+) = UMP + CO2. It functions in the pathway pyrimidine metabolism; UMP biosynthesis via de novo pathway; UMP from orotate: step 2/2. In terms of biological role, catalyzes the decarboxylation of orotidine 5'-monophosphate (OMP) to uridine 5'-monophosphate (UMP). In Pectobacterium carotovorum subsp. carotovorum (strain PC1), this protein is Orotidine 5'-phosphate decarboxylase.